Consider the following 512-residue polypeptide: Probable capsid protein 4 (512 aa).

This sequence belongs to the NCLDV major capsid protein family.

It localises to the virion. In Acanthamoeba polyphaga mimivirus (APMV), this protein is Probable capsid protein 4.